A 396-amino-acid chain; its full sequence is S-adenosylmethionine synthase 4 (396 aa).

E12 provides a ligand contact to Mg(2+). H18 serves as a coordination point for ATP. A K(+)-binding site is contributed by E46. E59 and Q102 together coordinate L-methionine. ATP is bound by residues 170–172, 238–241, D249, 255–256, A272, K276, and K280; these read DGK, SGRF, and RK. Residue D249 coordinates L-methionine. K280 lines the L-methionine pocket.

The protein belongs to the AdoMet synthase family. As to quaternary structure, homotetramer. Mn(2+) is required as a cofactor. The cofactor is Mg(2+). Co(2+) serves as cofactor. Requires K(+) as cofactor.

It localises to the cytoplasm. It catalyses the reaction L-methionine + ATP + H2O = S-adenosyl-L-methionine + phosphate + diphosphate. It participates in amino-acid biosynthesis; S-adenosyl-L-methionine biosynthesis; S-adenosyl-L-methionine from L-methionine: step 1/1. Catalyzes the formation of S-adenosylmethionine from methionine and ATP. The reaction comprises two steps that are both catalyzed by the same enzyme: formation of S-adenosylmethionine (AdoMet) and triphosphate, and subsequent hydrolysis of the triphosphate. The sequence is that of S-adenosylmethionine synthase 4 (SAM4) from Hordeum vulgare (Barley).